Reading from the N-terminus, the 92-residue chain is Acylphosphatase (92 aa).

Positions Arg6–Arg92 constitute an Acylphosphatase-like domain. Residues Arg21 and Asn39 contribute to the active site.

It belongs to the acylphosphatase family.

The enzyme catalyses an acyl phosphate + H2O = a carboxylate + phosphate + H(+). The protein is Acylphosphatase (acyP) of Natronomonas pharaonis (strain ATCC 35678 / DSM 2160 / CIP 103997 / JCM 8858 / NBRC 14720 / NCIMB 2260 / Gabara) (Halobacterium pharaonis).